We begin with the raw amino-acid sequence, 120 residues long: Large ribosomal subunit protein bL12 (120 aa).

This sequence belongs to the bacterial ribosomal protein bL12 family. Homodimer. Part of the ribosomal stalk of the 50S ribosomal subunit. Forms a multimeric L10(L12)X complex, where L10 forms an elongated spine to which 2 to 4 L12 dimers bind in a sequential fashion. Binds GTP-bound translation factors.

In terms of biological role, forms part of the ribosomal stalk which helps the ribosome interact with GTP-bound translation factors. Is thus essential for accurate translation. The chain is Large ribosomal subunit protein bL12 from Aeromonas salmonicida (strain A449).